We begin with the raw amino-acid sequence, 355 residues long: Tetraacyldisaccharide 4'-kinase (355 aa).

An ATP-binding site is contributed by 64–71; the sequence is YVGGTGKT. The disordered stretch occupies residues 206–226; that stretch reads NRAPQSSATPTAASGQGPRRA. Positions 208–222 are enriched in low complexity; sequence APQSSATPTAASGQG.

The protein belongs to the LpxK family.

It catalyses the reaction a lipid A disaccharide + ATP = a lipid IVA + ADP + H(+). Its pathway is glycolipid biosynthesis; lipid IV(A) biosynthesis; lipid IV(A) from (3R)-3-hydroxytetradecanoyl-[acyl-carrier-protein] and UDP-N-acetyl-alpha-D-glucosamine: step 6/6. Transfers the gamma-phosphate of ATP to the 4'-position of a tetraacyldisaccharide 1-phosphate intermediate (termed DS-1-P) to form tetraacyldisaccharide 1,4'-bis-phosphate (lipid IVA). In Bordetella petrii (strain ATCC BAA-461 / DSM 12804 / CCUG 43448), this protein is Tetraacyldisaccharide 4'-kinase.